The following is a 72-amino-acid chain: Conotoxin VnMKLT2-021 (72 aa).

A signal peptide spans 1-22 (MKLTCVLIVAVLFLTACQLTTA). The propeptide occupies 23 to 45 (ASYARSERQHPDLGSSDQNSKLT). Disulfide bonds link C48-C62, C55-C66, and C61-C71.

This sequence belongs to the conotoxin O1 superfamily. Expressed by the venom duct.

Its subcellular location is the secreted. The chain is Conotoxin VnMKLT2-021 from Conus ventricosus (Mediterranean cone).